The chain runs to 65 residues: Hirudin-2' (65 aa).

Residues Ile1–Tyr3 form an interaction with thrombin active site region. Disulfide bonds link Cys6-Cys14, Cys16-Cys28, and Cys22-Cys39. The interval Cys39 to Gln65 is disordered. Thr45 is a glycosylation site (O-linked (GalNAc...) threonine). Residues Asp55–Gln65 form an interaction with fibrinogen-binding exosite of thrombin region. The segment covering Asp55–Gln65 has biased composition (acidic residues). Residue Tyr63 is modified to Sulfotyrosine.

Belongs to the protease inhibitor I14 (hirudin) family.

Its subcellular location is the secreted. Functionally, hirudin is a potent thrombin-specific protease inhibitor. It forms a stable non-covalent complex with alpha-thrombin, thereby abolishing its ability to cleave fibrinogen. This Hirudo medicinalis (Medicinal leech) protein is Hirudin-2'.